The primary structure comprises 292 residues: Xyloglucan endotransglucosylase/hydrolase protein A (292 aa).

The signal sequence occupies residues 1–20 (MGSSLWTCLILLSLASASFA). The region spanning 21–219 (ANPRTPIDVP…WSKAPFIASY (199 aa)) is the GH16 domain. Glu105 (nucleophile) is an active-site residue. Glu109 acts as the Proton donor in catalysis. Glu109 provides a ligand contact to xyloglucan. An N-linked (GlcNAc...) asparagine glycan is attached at Asn113. Residues 122-124 (QTN), 132-134 (DRE), 198-199 (DW), and Gly203 contribute to the xyloglucan site. 2 disulfides stabilise this stretch: Cys227/Cys236 and Cys273/Cys286. Arg278 contributes to the xyloglucan binding site.

The protein belongs to the glycosyl hydrolase 16 family. XTH group 1 subfamily. In terms of processing, contains at least one intrachain disulfide bond essential for its enzymatic activity. As to expression, predominantly expressed in the phloem fibers of growing internodes. Expressed in xylem cells in the basal part of the internode. In the internode, it is expressed closer to the top of the internode compared to XTHB.

Its subcellular location is the secreted. It is found in the cell wall. The protein localises to the extracellular space. It localises to the apoplast. It catalyses the reaction breaks a beta-(1-&gt;4) bond in the backbone of a xyloglucan and transfers the xyloglucanyl segment on to O-4 of the non-reducing terminal glucose residue of an acceptor, which can be a xyloglucan or an oligosaccharide of xyloglucan.. Functionally, catalyzes xyloglucan endohydrolysis (XEH) and/or endotransglycosylation (XET). Cleaves and religates xyloglucan polymers, an essential constituent of the primary cell wall, and thereby participates in cell wall construction of growing tissues. The polypeptide is Xyloglucan endotransglucosylase/hydrolase protein A (XTHA) (Phaseolus angularis (Azuki bean)).